Reading from the N-terminus, the 303-residue chain is MAEGLRAPPPPGNGSECPDGARWVLRLLGECARDGRDVGSALLGLLSIGCFAAAALPQFYQACKTGIMDRALSIYFLLGWLGGDLLNLIGSFLANQLPLQVYTAVYYVLADLVMLSLYGYYKAKNWGTGATASINAACLFCLLGTATTLTVLSHDTGPAPNPAAFGGRSLLSLGLEGPGPEPISKTEIIGFAIGSISSVLYLCSRLPQIYTNYRRKSTAGVSFLLFALVMLGNLLYGTSVLLKNPEPGQSEGDYILHHLPWLIGSLGVLSLDVIISFQFLAYRTGQPSAGEEREALLAEHGDS.

The Lumenal portion of the chain corresponds to 1–38 (MAEGLRAPPPPGNGSECPDGARWVLRLLGECARDGRDV). Asn-13 carries an N-linked (GlcNAc...) asparagine glycan. Residues 36 to 102 (RDVGSALLGL…LANQLPLQVY (67 aa)) form the PQ-loop 1 domain. A helical membrane pass occupies residues 39–59 (GSALLGLLSIGCFAAAALPQF). Residues 60–73 (YQACKTGIMDRALS) lie on the Cytoplasmic side of the membrane. A helical transmembrane segment spans residues 74–94 (IYFLLGWLGGDLLNLIGSFLA). Residues 95-96 (NQ) are Lumenal-facing. The helical transmembrane segment at 97–117 (LPLQVYTAVYYVLADLVMLSL) threads the bilayer. Over 118-131 (YGYYKAKNWGTGAT) the chain is Cytoplasmic. Residues 132–152 (ASINAACLFCLLGTATTLTVL) traverse the membrane as a helical segment. Residues 153–182 (SHDTGPAPNPAAFGGRSLLSLGLEGPGPEP) lie on the Lumenal side of the membrane. Residues 183 to 203 (ISKTEIIGFAIGSISSVLYLC) form a helical membrane-spanning segment. Residues 186-251 (TEIIGFAIGS…LKNPEPGQSE (66 aa)) form the PQ-loop 2 domain. The Cytoplasmic portion of the chain corresponds to 204–220 (SRLPQIYTNYRRKSTAG). Residues 221–241 (VSFLLFALVMLGNLLYGTSVL) traverse the membrane as a helical segment. Residues 242–260 (LKNPEPGQSEGDYILHHLP) are Lumenal-facing. The helical transmembrane segment at 261-281 (WLIGSLGVLSLDVIISFQFLA) threads the bilayer. The Cytoplasmic segment spans residues 282 to 303 (YRTGQPSAGEEREALLAEHGDS). A Di-leucine motif motif is present at residues 296–297 (LL).

Belongs to the laat-1 family.

Its subcellular location is the lysosome membrane. Its function is as follows. Amino acid transporter that specifically mediates the pH-dependent export of the cationic amino acids arginine, histidine and lysine from lysosomes. The chain is Lysosomal amino acid transporter 1 homolog (SLC66A1) from Gallus gallus (Chicken).